The chain runs to 388 residues: Xylose isomerase (388 aa).

Residues His-54 and Asp-57 contribute to the active site. Mg(2+) contacts are provided by Glu-181, Glu-217, His-220, Asp-245, Asp-255, Asp-257, and Asp-287.

The protein belongs to the xylose isomerase family. In terms of assembly, homotetramer. It depends on Mg(2+) as a cofactor.

It localises to the cytoplasm. The enzyme catalyses alpha-D-xylose = alpha-D-xylulofuranose. Functionally, involved in D-xylose catabolism. This Streptomyces murinus protein is Xylose isomerase (xylA).